Here is a 150-residue protein sequence, read N- to C-terminus: Large ribosomal subunit protein uL13 (150 aa).

It belongs to the universal ribosomal protein uL13 family. In terms of assembly, part of the 50S ribosomal subunit.

Its function is as follows. This protein is one of the early assembly proteins of the 50S ribosomal subunit, although it is not seen to bind rRNA by itself. It is important during the early stages of 50S assembly. In Mesoplasma florum (strain ATCC 33453 / NBRC 100688 / NCTC 11704 / L1) (Acholeplasma florum), this protein is Large ribosomal subunit protein uL13.